The primary structure comprises 363 residues: MSGNTYGKLFTVTTAGESHGPALVAIVDGCPPGLELSLEDMQRDLDRRKPGTSRHTTQRQEDDVVEILSGVFEGKTTGCAIGLLIRNTDQKSKDYSAIKDLFRPAHADYTYHHKYGIRDYRGGGRSSARETAMRVAAGAIAKKYLATQGIQVRGYMSQLGPIEIPFKTWDSVEQNAFFSPDPDKVPALETYMDQLRRDQDSVGAKITVVAEGVMPGLGEPIFDRLDAELAHALMSINAVKGVEIGAGFASVSQRGTEHRDELTPEGFLSNNAGGILGGISSGQPIVAHLALKPTSSITTPGRSIDIDGNPVEVITKGRHDPCVGIRATPIAEAMMAIVLMDHLLRHRAQNAEVRVATPVLPQL.

NADP(+)-binding residues include R48 and R54. Residues 125-127 (RSS), 237-238 (NA), G277, 292-296 (KPTSS), and R318 contribute to the FMN site.

It belongs to the chorismate synthase family. As to quaternary structure, homotetramer. It depends on FMNH2 as a cofactor.

It catalyses the reaction 5-O-(1-carboxyvinyl)-3-phosphoshikimate = chorismate + phosphate. It participates in metabolic intermediate biosynthesis; chorismate biosynthesis; chorismate from D-erythrose 4-phosphate and phosphoenolpyruvate: step 7/7. Its function is as follows. Catalyzes the anti-1,4-elimination of the C-3 phosphate and the C-6 proR hydrogen from 5-enolpyruvylshikimate-3-phosphate (EPSP) to yield chorismate, which is the branch point compound that serves as the starting substrate for the three terminal pathways of aromatic amino acid biosynthesis. This reaction introduces a second double bond into the aromatic ring system. This is Chorismate synthase from Ectopseudomonas mendocina (strain ymp) (Pseudomonas mendocina).